A 221-amino-acid chain; its full sequence is Probable GTP-binding protein EngB (221 aa).

In terms of domain architecture, EngB-type G spans Gln-37–Glu-219. GTP is bound by residues Gly-45–Ser-52, Gly-72–Glu-76, Asp-97–Gly-100, Thr-164–Asp-167, and Thr-198–Ser-200. Mg(2+) is bound by residues Ser-52 and Thr-74.

The protein belongs to the TRAFAC class TrmE-Era-EngA-EngB-Septin-like GTPase superfamily. EngB GTPase family. Requires Mg(2+) as cofactor.

Necessary for normal cell division and for the maintenance of normal septation. The polypeptide is Probable GTP-binding protein EngB (Afipia carboxidovorans (strain ATCC 49405 / DSM 1227 / KCTC 32145 / OM5) (Oligotropha carboxidovorans)).